The sequence spans 461 residues: Cysteine--tRNA ligase (461 aa).

Cys-28 is a Zn(2+) binding site. A 'HIGH' region motif is present at residues 30–40 (ITVYDLCHIGH). Residues Cys-209, His-234, and Glu-238 each contribute to the Zn(2+) site. Positions 266–270 (KMSKS) match the 'KMSKS' region motif. Lys-269 is a binding site for ATP.

It belongs to the class-I aminoacyl-tRNA synthetase family. As to quaternary structure, monomer. Zn(2+) serves as cofactor.

It is found in the cytoplasm. It catalyses the reaction tRNA(Cys) + L-cysteine + ATP = L-cysteinyl-tRNA(Cys) + AMP + diphosphate. This is Cysteine--tRNA ligase from Cronobacter sakazakii (strain ATCC BAA-894) (Enterobacter sakazakii).